Consider the following 759-residue polypeptide: Fidgetin (759 aa).

4 disordered regions span residues 89–111, 200–237, 258–293, and 337–429; these read SNYS…PWQP, SQAT…PGYN, VGSG…VPGY, and SYGQ…VMSE. 2 stretches are compositionally biased toward pro residues: residues 221-232 and 266-289; these read QPPPPPPPPPAL and GAPP…PPTT. Composition is skewed to polar residues over residues 337-347 and 382-418; these read SYGQQRSTQSP and LMPS…SSES. T400 bears the Phosphothreonine mark. ATP is bound by residues A489 and 529–534; that span reads GTGKTL.

Belongs to the AAA ATPase family. As to quaternary structure, interacts with AKAP8 (via C-terminus). In terms of tissue distribution, widely expressed.

It is found in the nucleus matrix. The protein localises to the cytoplasm. The protein resides in the cytoskeleton. Its subcellular location is the microtubule organizing center. It localises to the centrosome. ATP-dependent microtubule severing protein. Severs microtubules along their length and depolymerizes their ends, primarily the minus-end, suppressing microtubule growth from and attachment to centrosomes. Microtubule severing may promote rapid reorganization of cellular microtubule arrays and the release of microtubules from the centrosome following nucleation. Microtubule release from the mitotic spindle poles may allow depolymerization of the microtubule end proximal to the spindle pole, leading to poleward microtubule flux and poleward motion of chromosome. This Mus musculus (Mouse) protein is Fidgetin (Fign).